A 466-amino-acid chain; its full sequence is NVGFKAGVKEYKLTYYTPDYETLDTDILAAFRVTPQPGVPPEEAGAAVAAESSTGTWTTVWTDGLTNLDRYKGRCYHIEPVAGEENQYIVYVAYPLDLFEEGSVTNMFTSIVGNVFGFKALRVLRLEDLRIPPAYVKTFQGPPHGIQVERDKLNKYGRPLLGCTIKPKLGLSAKNYGRAVYECLRGGLDFTKDDENVNSQPFMRWRDRFVFCVEAIYKAQAETGEIKGHYLNATAGTSEEMIKRAVFARELGVPIVMHDYLTGGFTANTSLSHYCRDNGLLLHIHRAMHAVIDRQKNHGIHFRVLAKALRMSGGDHIHSGTVVGKLEGERDITLGFVVLLRDDYIEKDRSRGIYFTQPWVSLPGVLPVASGGIHVWHMPALTEIFGDDSVLQFGGGTLGHPWGNAPGAVANRVALEACVQARNEGRDLAREGNEIIRKASKWSPELAAACEVWKEIKFEFQAMDTL.

Lysine 5 bears the N6,N6,N6-trimethyllysine mark. Substrate is bound by residues asparagine 114 and threonine 164. Residue lysine 166 is the Proton acceptor of the active site. Lysine 168 is a binding site for substrate. Mg(2+) is bound by residues lysine 192, aspartate 194, and glutamate 195. Lysine 192 bears the N6-carboxylysine mark. The active-site Proton acceptor is histidine 285. Positions 286, 318, and 370 each coordinate substrate.

This sequence belongs to the RuBisCO large chain family. Type I subfamily. As to quaternary structure, heterohexadecamer of 8 large chains and 8 small chains. The cofactor is Mg(2+).

The protein resides in the plastid. It localises to the chloroplast. It catalyses the reaction 2 (2R)-3-phosphoglycerate + 2 H(+) = D-ribulose 1,5-bisphosphate + CO2 + H2O. The catalysed reaction is D-ribulose 1,5-bisphosphate + O2 = 2-phosphoglycolate + (2R)-3-phosphoglycerate + 2 H(+). In terms of biological role, ruBisCO catalyzes two reactions: the carboxylation of D-ribulose 1,5-bisphosphate, the primary event in carbon dioxide fixation, as well as the oxidative fragmentation of the pentose substrate in the photorespiration process. Both reactions occur simultaneously and in competition at the same active site. This Drosera regia (King sundew) protein is Ribulose bisphosphate carboxylase large chain.